The primary structure comprises 122 residues: Large ribosomal subunit protein uL14c (122 aa).

The protein belongs to the universal ribosomal protein uL14 family. As to quaternary structure, part of the 50S ribosomal subunit.

Its subcellular location is the plastid. The protein localises to the chloroplast. Functionally, binds to 23S rRNA. The polypeptide is Large ribosomal subunit protein uL14c (Platanus occidentalis (Sycamore)).